The sequence spans 414 residues: Protein IQ-DOMAIN 8 (414 aa).

The Nuclear localization signal 1 motif lies at 14–21 (NKKNITDD). Residues 40–61 (LISSSKGFKSRGGSYGTPSLGS) are disordered. IQ domains follow at residues 92 to 120 (REWA…AVVR), 121 to 143 (IQAI…CMQA), and 144 to 169 (LVRV…EKPS). Positions 119-132 (VRIQAIFRGRQVRK) are calmodulin-binding. 3 disordered regions span residues 156 to 190 (NRGP…SPGS), 218 to 244 (HQPR…SCKS), and 262 to 329 (GRLM…SGSF). Residues 164–184 (ELEKPSDQQKDDPAKQAEKGW) show a composition bias toward basic and acidic residues. Over residues 231 to 244 (KQGSVKKNNGSCKS) the composition is skewed to polar residues. Over residues 274–289 (NARKSESSVSEHDTVQ) the composition is skewed to basic and acidic residues. Positions 307–328 (SSSATSSESSSTSQSPVPFSGS) are enriched in low complexity. Positions 336–343 (YRKPSYMS) match the Nuclear localization signal 2 motif. A disordered region spans residues 347 to 398 (SIKAKQRRSGSSSSCSKTPFEKKQSMSYNGDVNVRRSAGSDPLNNQWTDLYP).

Belongs to the IQD family. As to quaternary structure, binds to multiple calmodulin (CaM) in the presence of Ca(2+) and CaM-like proteins.

Its subcellular location is the nucleus. It localises to the cytoplasm. It is found in the cytoskeleton. The protein resides in the nucleus envelope. In terms of biological role, may be involved in cooperative interactions with calmodulins or calmodulin-like proteins. Recruits calmodulin proteins to microtubules, thus being a potential scaffold in cellular signaling and trafficking. May associate with nucleic acids and regulate gene expression at the transcriptional or post-transcriptional level. The protein is Protein IQ-DOMAIN 8 of Arabidopsis thaliana (Mouse-ear cress).